A 50-amino-acid chain; its full sequence is uncharacterized protein (50 aa).

This is an uncharacterized protein from Treponema pallidum (strain Nichols).